Here is a 217-residue protein sequence, read N- to C-terminus: Elongation factor Ts (217 aa).

Residues 82–85 are involved in Mg(2+) ion dislocation from EF-Tu; that stretch reads TDFV.

This sequence belongs to the EF-Ts family.

The protein localises to the cytoplasm. Associates with the EF-Tu.GDP complex and induces the exchange of GDP to GTP. It remains bound to the aminoacyl-tRNA.EF-Tu.GTP complex up to the GTP hydrolysis stage on the ribosome. This chain is Elongation factor Ts, found in Desulfitobacterium hafniense (strain DSM 10664 / DCB-2).